The sequence spans 142 residues: Transcriptional regulator MraZ (142 aa).

SpoVT-AbrB domains lie at 5–47 (THTP…PAPE) and 76–119 (AHDE…DRVA).

This sequence belongs to the MraZ family. As to quaternary structure, forms oligomers.

Its subcellular location is the cytoplasm. The protein localises to the nucleoid. This Salinispora arenicola (strain CNS-205) protein is Transcriptional regulator MraZ.